We begin with the raw amino-acid sequence, 622 residues long: MTDRPDHIDSRVWELSETQEDWITQVHGHVRRVVECWKYTICCLISNMHTHRGAPQYDVFKWQDRSTIEWICSKKKVQYPERDTPDLYDNERAVAYKVLLVSDLSDHSPTSGIYHDLAFNLEGEAEESCALVLRGSQLQDIKGFLCRALEWVVSNNLTQEVVETISGEAKLQFSVGTTFRTLLKRDTDWDVIPTPRVEPNVPRIEGRRWTQMKKLPLLKEKEGPPSPWRALLLGADSEYIVCPPGTDQEAISWIHSQSEIECIRESKSTPASVITCLTSSLQSFAEGNPVRSRIHEDIIAFGINKKQEKKQSASSSASGEWKRAEYQVEEMSLPPWVEEEMVLLRSDQEDNWIELEKNAIYTEVDGVAEGLVDKYIEIVGRTKVASVIEKWQIAATRTFSQLHTDRSRITACPIITRDPSGNCQFWGMVLLGPHHVKRDTDNAPLLIAEIMGEDTEEKYPKHSVFSLKVEGKQFLLSLKITSFSRNKLYTFSNIRRVLIQPASIYSQVVLSRAAENNSLNLEVNPEIQLYLEGAQRGMTLYQWVRMILCLEFLMAIYNNPQMEGFLANMRRLHMSRHAMMERRQVFLPFGSRPEDKVNECIINNPIVAYLAKGWNSMPNVYY.

This sequence belongs to the influenza viruses PA family. As to quaternary structure, RNA polymerase is composed of three subunits: PA, PB1 and PB2.

It is found in the virion. The protein localises to the host nucleus. Subunit of the RNA-dependent RNA polymerase which is responsible for replication and transcription of virus RNA segments. The transcription of viral mRNAs occurs by a unique mechanism called cap-snatching. 5' methylated caps of cellular mRNAs are cleaved after 10-13 nucleotides by PA. In turn, these short capped RNAs are used as primers by PB1 for transcription of viral mRNAs. During virus replication, PB1 initiates RNA synthesis and copy vRNA into complementary RNA (cRNA) which in turn serves as a template for the production of more vRNAs. The sequence is that of Polymerase acidic protein from Thogoto virus (isolate SiAr 126) (Tho).